A 194-amino-acid chain; its full sequence is FK506-binding protein 3 (194 aa).

The first 19 residues, 1–19 (MNKFLIALLVLATLAVSFS), serve as a signal peptide directing secretion. The PPIase FKBP-type domain maps to 44–133 (GDYISLKYVG…YFDLEVVSIE (90 aa)). A helical membrane pass occupies residues 148–168 (VGTIIAFSMLAGFIVLVKFII). The interval 173–194 (DESNSKKPAPGKPKKTKAAKQN) is disordered. Over residues 184 to 194 (KPKKTKAAKQN) the composition is skewed to basic residues.

It belongs to the FKBP-type PPIase family.

It localises to the membrane. The enzyme catalyses [protein]-peptidylproline (omega=180) = [protein]-peptidylproline (omega=0). Inhibited by both FK506 and rapamycin. Its function is as follows. PPIases accelerate the folding of proteins by catalyzing the cis-trans isomerization of proline imidic peptide bonds in oligopeptides. The sequence is that of FK506-binding protein 3 (fkbp3) from Dictyostelium discoideum (Social amoeba).